The chain runs to 173 residues: Adenine phosphoribosyltransferase (173 aa).

It belongs to the purine/pyrimidine phosphoribosyltransferase family. As to quaternary structure, homodimer.

It localises to the cytoplasm. It catalyses the reaction AMP + diphosphate = 5-phospho-alpha-D-ribose 1-diphosphate + adenine. It participates in purine metabolism; AMP biosynthesis via salvage pathway; AMP from adenine: step 1/1. Functionally, catalyzes a salvage reaction resulting in the formation of AMP, that is energically less costly than de novo synthesis. This chain is Adenine phosphoribosyltransferase, found in Thermoanaerobacter sp. (strain X514).